Here is a 477-residue protein sequence, read N- to C-terminus: E3 ubiquitin-protein ligase TRIM17 (477 aa).

An RING-type zinc finger spans residues 16–66 (CSICLDYFTDPVMTTCGHNFCRACIQLSWEKARGKKGRRKRKGSFPCPECR). A B box-type zinc finger spans residues 94-135 (QKQDLCQEHHEPLKLFCQKDQSPICVVCRESREHRLHRVLPA). 4 residues coordinate Zn(2+): C99, H102, C121, and H127. Residues 135-223 (AEEAVQGYKL…TASRLRESVA (89 aa)) are a coiled coil. The 199-residue stretch at 277–475 (PRTVCRVPGQ…MVISTVTMWV (199 aa)) folds into the B30.2/SPRY domain.

This sequence belongs to the TRIM/RBCC family. In terms of assembly, interacts (via coiled coil) with TRIM44 (via coiled coil). Interacts with TRIM28; this interaction prevents TRIM28 activity on BCL2A1. Interacts with TRIM41; this interaction prevents TRIM41 activity on ZSCAN2. Interacts with BECN1. Interacts with NFATC3 and NFATC4; these interactions prevent NFATC3 and NFATC4 nuclear localization. In terms of processing, auto-ubiquitinated. Almost exclusively in the testis.

The protein resides in the cytoplasm. It localises to the lysosome. The enzyme catalyses S-ubiquitinyl-[E2 ubiquitin-conjugating enzyme]-L-cysteine + [acceptor protein]-L-lysine = [E2 ubiquitin-conjugating enzyme]-L-cysteine + N(6)-ubiquitinyl-[acceptor protein]-L-lysine.. Its pathway is protein modification; protein ubiquitination. E3 ubiquitin ligase that plays important roles in the regulation of neuronal apoptosis, selective autophagy or cell proliferation. Stimulates the degradation of kinetochore ZW10 interacting protein ZWINT in a proteasome-dependent manner, leading to negative regulation of cell proliferation. Inhibits autophagic degradation of diverse known targets while contributing to autophagy of midbodies. Autophagy-inhibitory activity involves MCL1, which TRIM17 assembles into complexes with the key autophagy regulator BECN1. Controls neuronal apoptosis by mediating ubiquitination and degradation of MCL1 to initiate neuronal death. In addition, regulates NFAT transcription factors NFATC3 and NFATC4 activities by preventing their nuclear localization, thus inhibiting their transcriptional activities. Decreases TRIM41-mediated degradation of ZSCAN2 thereby stimulating alpha-synuclein/SNCA transcription in neuronal cells. Prevents the E3 ubiquitin-ligase activity of TRIM28 and its interaction with anti-apoptotic BCL2A1, blocking TRIM28 from ubiquitinating BCL2A1. This chain is E3 ubiquitin-protein ligase TRIM17 (TRIM17), found in Homo sapiens (Human).